A 91-amino-acid chain; its full sequence is Gas vesicle protein K (91 aa).

It belongs to the gas vesicle GvpK family.

Its subcellular location is the gas vesicle. Functionally, might be involved in nucleating gas vesicle formation. Gas vesicles are hollow, gas filled proteinaceous nanostructures found in some microorganisms. It is not clear what function gas vesicles perform in soil bacteria. The polypeptide is Gas vesicle protein K (Streptomyces sp. (strain CB03234)).